We begin with the raw amino-acid sequence, 337 residues long: Cytoskeleton protein RodZ (337 aa).

At 1 to 111 (MNTEATHDQN…LGKRRKKRDG (111 aa)) the chain is on the cytoplasmic side. Residues 19–71 (LRNAREQLGLSQQAVAERLCLKVSTVRDIEEDKAPADLASTFLRGYIRSYARL) form the HTH cro/C1-type domain. Positions 30–49 (QQAVAERLCLKVSTVRDIEE) form a DNA-binding region, H-T-H motif. The chain crosses the membrane as a helical; Signal-anchor for type II membrane protein span at residues 112–132 (WLMTFTWLVLFVVIGLSGAWW). Over 133 to 337 (WQDHKAQQEE…TLNAEQSPAQ (205 aa)) the chain is Periplasmic. Positions 145–167 (TMADQSSAELSSNSEQGQSVPLN) are enriched in polar residues. A disordered region spans residues 145–218 (TMADQSSAEL…AVVSPSQANV (74 aa)). A compositionally biased stretch (low complexity) spans 168-207 (TSTTTDPATTSTPPASVDTTATNTQTPAVTAPAPAVDPQQ). The span at 208–218 (NAVVSPSQANV) shows a compositional bias: polar residues.

Belongs to the RodZ family.

The protein resides in the cell inner membrane. Cytoskeletal protein that is involved in cell-shape control through regulation of the length of the long axis. This chain is Cytoskeleton protein RodZ, found in Shigella flexneri serotype 5b (strain 8401).